A 334-amino-acid chain; its full sequence is Siroheme decarboxylase (334 aa).

The active site involves His-93.

It belongs to the Ahb/Nir family.

The enzyme catalyses siroheme + 2 H(+) = 12,18-didecarboxysiroheme + 2 CO2. Its pathway is porphyrin-containing compound metabolism. Involved in heme d1 biosynthesis. Catalyzes the decarboxylation of siroheme into didecarboxysiroheme. Siroheme is probably decarboxylated to monodecarboxysiroheme, which is in turn decarboxylated to didecarboxysiroheme. The chain is Siroheme decarboxylase from Hydrogenobacter thermophilus (strain DSM 6534 / IAM 12695 / TK-6).